A 421-amino-acid polypeptide reads, in one-letter code: Bone morphogenetic protein 10 (421 aa).

The signal sequence occupies residues 1–21 (MGSLVLPLSAVFCLVAHSASG). Positions 22 to 313 (SPIMGLEQSP…IDDSSARIRR (292 aa)) are excised as a propeptide. Asn67 and Asn131 each carry an N-linked (GlcNAc...) asparagine glycan. 3 cysteine pairs are disulfide-bonded: Cys320/Cys386, Cys349/Cys418, and Cys353/Cys420.

This sequence belongs to the TGF-beta family. In terms of assembly, homodimer; disulfide-linked. Interacts with FBN1 (via N-terminal domain) and FBN2. Interacts with ENG. In the embryo, expressed exclusively in the ventricular trabecular myocardium of the developing heart from 9.0 dpc-13.5 dpc. By 16.5 dpc-18.5 dpc, only detectable in atria. Highly expressed in the adult heart where it is found in the right atrium but not in the left atrium. Lower levels in adult liver and lung.

It is found in the secreted. In terms of biological role, required for maintaining the proliferative activity of embryonic cardiomyocytes by preventing premature activation of the negative cell cycle regulator CDKN1C/p57KIP and maintaining the required expression levels of cardiogenic factors such as MEF2C and NKX2-5. Acts as a ligand for ACVRL1/ALK1, BMPR1A/ALK3 and BMPR1B/ALK6, leading to activation of SMAD1, SMAD5 and SMAD8 transcription factors. Inhibits endothelial cell migration and growth. May reduce cell migration and cell matrix adhesion in breast cancer cell lines. This Mus musculus (Mouse) protein is Bone morphogenetic protein 10 (Bmp10).